Consider the following 246-residue polypeptide: MNAFLHAISFFTRIPVPWLRPSEEAWRKSVNWYPAVGLVIGLLLWGVHQAGLVLFSPWIAAILTLIAWVYVTGGLHMDGWMDLADGLGSSRPREQILAIMKDSRVGAMGVLAAIMLLLIKAGAVAELAHPGWGSFLIVAPVAARTHVLLSIKLWPYLSADKGIGKGISSGLSVSSIIVSYIIVFAAGWYLGGLQVMTAIFLSLLFALWFSRSVAKKLGGLNGDCYGAVIESSEAVVLLVLVGSWWL.

The next 7 helical transmembrane spans lie at V30 to A50, G51 to V71, V105 to A125, G131 to I151, I167 to Y189, L193 to S210, and G226 to L246.

The protein belongs to the CobS family. Mg(2+) is required as a cofactor.

The protein localises to the cell membrane. The catalysed reaction is alpha-ribazole + adenosylcob(III)inamide-GDP = adenosylcob(III)alamin + GMP + H(+). It carries out the reaction alpha-ribazole 5'-phosphate + adenosylcob(III)inamide-GDP = adenosylcob(III)alamin 5'-phosphate + GMP + H(+). It participates in cofactor biosynthesis; adenosylcobalamin biosynthesis; adenosylcobalamin from cob(II)yrinate a,c-diamide: step 7/7. In terms of biological role, joins adenosylcobinamide-GDP and alpha-ribazole to generate adenosylcobalamin (Ado-cobalamin). Also synthesizes adenosylcobalamin 5'-phosphate from adenosylcobinamide-GDP and alpha-ribazole 5'-phosphate. The chain is Adenosylcobinamide-GDP ribazoletransferase from Brevibacillus brevis (strain 47 / JCM 6285 / NBRC 100599).